We begin with the raw amino-acid sequence, 1058 residues long: Isoleucine--tRNA ligase (1058 aa).

The short motif at P48–T58 is the 'HIGH' region element. Positions K596–S600 match the 'KMSKS' region motif. K599 contacts ATP.

It belongs to the class-I aminoacyl-tRNA synthetase family. IleS type 2 subfamily. Monomer. Requires Zn(2+) as cofactor.

It is found in the cytoplasm. It catalyses the reaction tRNA(Ile) + L-isoleucine + ATP = L-isoleucyl-tRNA(Ile) + AMP + diphosphate. Its function is as follows. Catalyzes the attachment of isoleucine to tRNA(Ile). As IleRS can inadvertently accommodate and process structurally similar amino acids such as valine, to avoid such errors it has two additional distinct tRNA(Ile)-dependent editing activities. One activity is designated as 'pretransfer' editing and involves the hydrolysis of activated Val-AMP. The other activity is designated 'posttransfer' editing and involves deacylation of mischarged Val-tRNA(Ile). The polypeptide is Isoleucine--tRNA ligase (Methanosarcina acetivorans (strain ATCC 35395 / DSM 2834 / JCM 12185 / C2A)).